Here is a 412-residue protein sequence, read N- to C-terminus: Probable ribonuclease FAU-1 (412 aa).

Belongs to the FAU-1 family.

In terms of biological role, probable RNase involved in rRNA stability through maturation and/or degradation of precursor rRNAs. Binds to RNA in loop regions with AU-rich sequences. In Sulfurisphaera tokodaii (strain DSM 16993 / JCM 10545 / NBRC 100140 / 7) (Sulfolobus tokodaii), this protein is Probable ribonuclease FAU-1.